Here is a 369-residue protein sequence, read N- to C-terminus: tRNA/tmRNA (uracil-C(5))-methyltransferase (369 aa).

S-adenosyl-L-methionine contacts are provided by Q190, Y218, N223, E239, and D301. The active-site Nucleophile is the C326. The active-site Proton acceptor is E360.

This sequence belongs to the class I-like SAM-binding methyltransferase superfamily. RNA M5U methyltransferase family. TrmA subfamily.

The enzyme catalyses uridine(54) in tRNA + S-adenosyl-L-methionine = 5-methyluridine(54) in tRNA + S-adenosyl-L-homocysteine + H(+). It catalyses the reaction uridine(341) in tmRNA + S-adenosyl-L-methionine = 5-methyluridine(341) in tmRNA + S-adenosyl-L-homocysteine + H(+). Its function is as follows. Dual-specificity methyltransferase that catalyzes the formation of 5-methyluridine at position 54 (m5U54) in all tRNAs, and that of position 341 (m5U341) in tmRNA (transfer-mRNA). The protein is tRNA/tmRNA (uracil-C(5))-methyltransferase of Vibrio vulnificus (strain YJ016).